Here is a 342-residue protein sequence, read N- to C-terminus: Antihemorrhagic factor HSF (342 aa).

The first 19 residues, 1–19, serve as a signal peptide directing secretion; it reads MNSLVALVLLGQIIGSTLS. 2 Cystatin fetuin-A-type domains span residues 22-130 and 141-254; these read VRGD…VKCH and RNCS…SNCV. Residues 23-25 carry the Cell attachment site motif; it reads RGD. An indispensable for metalloproteinase inhibition region spans residues 24 to 108; it reads GDLECDDKEA…RQQHNHAVEM (85 aa). 6 disulfide bridges follow: C28/C332, C85/C96, C110/C129, C143/C146, C205/C217, and C230/C253. An N-linked (GlcNAc...) asparagine glycan is attached at N142. N204 carries an N-linked (GlcNAc...) asparagine glycan. N282 carries an N-linked (GlcNAc...) asparagine glycan.

The protein belongs to the fetuin family. Cys-63 may exist in a mixed disulfide form with a thiol compound such as glutathione. In terms of tissue distribution, expressed by the liver.

The protein localises to the secreted. Functionally, inhibits hemorrhagic and proteolytic activities of metalloproteinases (HR1A, HR1B, HR2a, HR2b and H2 proteinase from T.flavodidis and brevilysins H3, H4, H6 and L4 from A.halys brevicaudus). Has no effect on brevilysins H2. Has no effect on papain and cathepsin-B. The polypeptide is Antihemorrhagic factor HSF (Protobothrops flavoviridis (Habu)).